A 144-amino-acid polypeptide reads, in one-letter code: Benzoylsuccinyl-CoA thiolase subunit BbsA (144 aa).

4 residues coordinate Zn(2+): C40, C43, C54, and C57.

The protein belongs to the BbsA family. In terms of assembly, heterotetramer composed of two BbsA subunits and two BbsB subunits. BbsA forms homodimeric subcomplexes. Both BbsA and BbsB are essential for enzymatic activity.

It catalyses the reaction (S)-2-benzoylsuccinyl-CoA + CoA = benzoyl-CoA + succinyl-CoA. Its pathway is xenobiotic degradation; toluene degradation. Its function is as follows. Component of the BbsAB thiolase complex, which catalyzes the thiolytic cleavage of (S)-2-benzoylsuccinyl-CoA to succinyl-CoA and benzoyl-CoA, the final step of anaerobic toluene metabolism. The BbsA subunit critically contributes to an induced-fit process for productive binding of a CoA substrate into the active site of BbsB. The protein is Benzoylsuccinyl-CoA thiolase subunit BbsA of Thauera aromatica.